The chain runs to 286 residues: MSAPLDAALHALQEEQARLKMRLWDLQQLRKELGDSPKDKVPFSVPKIPLVFRGHTQQDPEVPKSLVSNLRIHCPLLAGSALITFDDPKVAEQVLQQKEHTINMEECRLRVQVQPLELPMVTTIQMSSQLSGRRVLVTGFPASLRLSEEELLDKLEIFFGKTRNGGGDVDVRELLPGSVMLGFARDGVAQRLCQIGQFTVPLGGQQVPLRVSPYVNGEIQKAEIRSQPVPRSVLVLNIPDILDGPELHDVLEIHFQKPTRGGGEVEALTVVPQGQQGLAVFTSESG.

Residues 5–26 are leucine-zipper; the sequence is LDAALHALQEEQARLKMRLWDL. 2 NID domains span residues 81 to 170 and 183 to 266; these read ALIT…GDVD and FARD…GEVE.

It belongs to the NMI family. In terms of assembly, homodimer. Also interacts with BATF. Interacts with TRIM21. Interacts with NMI; the interaction is direct and is facilitated by TRIM21. Post-translationally, phosphorylated. Dephosphorylation correlates with the formation of a complex with NMI. In terms of tissue distribution, expressed in a wide range of cell types, including fibroblasts, macrophages, and epithelial cells.

The protein resides in the cytoplasm. Its subcellular location is the nucleus. It localises to the secreted. In terms of biological role, acts as a signaling pathway regulator involved in innate immune system response. In response to interferon IFN-alpha, associates in a complex with signaling pathway regulator NMI to regulate immune response; the complex formation prevents proteasome-mediated degradation of IFI35 and correlates with IFI35 dephosphorylation. In complex with NMI, inhibits virus-triggered type I interferon/IFN-beta production. In complex with NMI, negatively regulates nuclear factor NF-kappa-B signaling by inhibiting the nuclear translocation, activation and transcription of the NF-kappa-B subunit p65/RELA, resulting in the inhibition of endothelial cell proliferation, migration and re-endothelialization of injured arteries. Beside its role as an intracellular signaling pathway regulator, also functions extracellularly as damage-associated molecular patterns (DAMPs) to promote inflammation when actively released by macrophage to the extracellular space during cell injury and pathogen invasion. Macrophage-secreted IFI35 activates NF-kappa-B signaling in adjacent macrophages through Toll-like receptor 4/TLR4 activation, thereby inducing NF-kappa-B translocation from the cytoplasm into the nucleus which promotes the release of pro-inflammatory cytokines. This chain is Interferon-induced 35 kDa protein, found in Homo sapiens (Human).